The primary structure comprises 765 residues: Endosialin (765 aa).

The first 17 residues, 1-17 (MLLRLLLAWVAAVPALG), serve as a signal peptide directing secretion. Residues 18 to 695 (QVPWTPEPRA…GQSQRDDRWL (678 aa)) are Extracellular-facing. The region spanning 30–156 (GPSSCYALFP…CTLAVDGYLC (127 aa)) is the C-type lectin domain. 6 disulfide bridges follow: cysteine 131–cysteine 147, cysteine 164–cysteine 213, cysteine 203–cysteine 230, cysteine 316–cysteine 326, cysteine 322–cysteine 335, and cysteine 337–cysteine 350. One can recognise a Sushi domain in the interval 162–232 (GACPALPLEV…WSQTGPLCPG (71 aa)). An EGF-like; calcium-binding domain is found at 312 to 351 (DTDECQIAGVCQQMCVNYVGGFECYCSEGHELEADGISCS). O-linked (GalNAc...) threonine glycosylation is found at threonine 401, threonine 428, threonine 448, threonine 456, threonine 459, and threonine 466. O-linked (GalNAc...) serine glycosylation is found at serine 467 and serine 470. Threonine 472 carries O-linked (GalNAc...) threonine glycosylation. Residue serine 477 is glycosylated (O-linked (GalNAc...) serine). Residues threonine 488, threonine 517, threonine 520, threonine 535, threonine 552, threonine 554, threonine 556, threonine 570, threonine 571, threonine 604, and threonine 613 are each glycosylated (O-linked (GalNAc...) threonine). The interval 548 to 675 (MSPDTHTITY…QLPSVPSTAA (128 aa)) is disordered. Pro residues predominate over residues 622 to 633 (PAFPSSPLPPQR). O-linked (GalNAc...) serine glycosylation is found at serine 626 and serine 627. 2 O-linked (GalNAc...) threonine glycosylation sites follow: threonine 635 and threonine 638. Positions 635–647 (TNQTSSISPTHSY) are enriched in polar residues. O-linked (GalNAc...) serine glycans are attached at residues serine 639 and serine 640. Residue threonine 644 is glycosylated (O-linked (GalNAc...) threonine). O-linked (GalNAc...) serine glycosylation is present at serine 663. Threonine 673 carries O-linked (GalNAc...) threonine glycosylation. A helical membrane pass occupies residues 696-716 (LVALLVPTCVFLVVLLALGIV). At 717–765 (YCTRCGSHAPNKRITDCYRWVTHAGNKSSTEPMPPRGSLTGVQTCRTSV) the chain is on the cytoplasmic side. Serine 754 bears the Phosphoserine mark.

As to quaternary structure, interacts with PDGFRA; this interaction promotes PDGF receptor signaling pathway. Interacts with integrin beta-1/ITGB1. Interacts with insulin receptor/INSR; this interaction diminishes INSR autophosphorylation. In terms of processing, O-glycosylated by sialylated oligosaccharides. Post-translationally, may be N-glycosylated. As to expression, expressed in cell lines derived from endothelial cells, embryonic fibroblasts and preadipocytes. Expressed in skeletal muscle by a subset of pericytes.

The protein localises to the membrane. Its function is as follows. Cell surface glycoprotein involved in various biological processes including angiogenesis, immune response modulation, and tissue remodeling and repair. Participates in pericyte proliferation through positive modulation of the PDGF receptor signaling pathway. Acts as a scaffold for factor X, triggering allosteric changes and the spatial re-alignment of factor X with the TF-factor VIIa complex, thereby enhancing coagulation activation. Modulates the insulin signaling pathway by interacting with insulin receptor/INSR and by diminishing its capacity to be autophosphorylated in response to insulin. Also regulates LPS-induced inflammatory responses in macrophages by favoring production of proinflammatory cytokines. In Mus musculus (Mouse), this protein is Endosialin (Cd248).